Consider the following 268-residue polypeptide: Indole-3-glycerol phosphate synthase (268 aa).

The protein belongs to the TrpC family.

It carries out the reaction 1-(2-carboxyphenylamino)-1-deoxy-D-ribulose 5-phosphate + H(+) = (1S,2R)-1-C-(indol-3-yl)glycerol 3-phosphate + CO2 + H2O. Its pathway is amino-acid biosynthesis; L-tryptophan biosynthesis; L-tryptophan from chorismate: step 4/5. This chain is Indole-3-glycerol phosphate synthase, found in Acinetobacter baumannii (strain SDF).